Reading from the N-terminus, the 463-residue chain is Type IV secretion system protein PtlD homolog (463 aa).

A signal peptide spans 1–24 (MAGLSRILLSCTLACLLAGQAAQA). Transmembrane regions (helical) follow at residues 118–138 (LQPLVYSMMTLLVLLTGYALL), 232–252 (WLLCAMIVATSAGGWLCLAAS), 253–273 (LLIVPGLIVTLLLSLGPLFLV), 294–314 (ALVFMALGTPAVGLLSDVLAG), and 333–353 (MLAATLCATATLMLLTLVPLA). Positions 376 to 410 (AHRQAAARQYAPRPAAAAAAAGPHQAGTYAASATP) are enriched in low complexity. A disordered region spans residues 376-463 (AHRQAAARQY…RVLPRKPNLP (88 aa)). The segment covering 411–420 (APAPARPAPS) has biased composition (pro residues). The segment covering 441–455 (VRRDDRPAPAPDRRV) has biased composition (basic and acidic residues).

Its subcellular location is the cell membrane. In Bordetella parapertussis (strain 12822 / ATCC BAA-587 / NCTC 13253), this protein is Type IV secretion system protein PtlD homolog (ptlD).